The sequence spans 198 residues: Dephospho-CoA kinase (198 aa).

The region spanning 3–198 (VVGLTGGIGA…HRRYSLLAAA (196 aa)) is the DPCK domain. 11–16 (GAGKST) lines the ATP pocket.

It belongs to the CoaE family.

The protein resides in the cytoplasm. It carries out the reaction 3'-dephospho-CoA + ATP = ADP + CoA + H(+). The protein operates within cofactor biosynthesis; coenzyme A biosynthesis; CoA from (R)-pantothenate: step 5/5. Its function is as follows. Catalyzes the phosphorylation of the 3'-hydroxyl group of dephosphocoenzyme A to form coenzyme A. In Methylococcus capsulatus (strain ATCC 33009 / NCIMB 11132 / Bath), this protein is Dephospho-CoA kinase.